Here is a 207-residue protein sequence, read N- to C-terminus: Thiamine-phosphate synthase (207 aa).

Residues 36–40 and aspartate 68 contribute to the 4-amino-2-methyl-5-(diphosphooxymethyl)pyrimidine site; that span reads QLRIK. Positions 69 and 88 each coordinate Mg(2+). Serine 106 provides a ligand contact to 4-amino-2-methyl-5-(diphosphooxymethyl)pyrimidine. 132 to 134 provides a ligand contact to 2-[(2R,5Z)-2-carboxy-4-methylthiazol-5(2H)-ylidene]ethyl phosphate; the sequence is TQT. Residue lysine 135 participates in 4-amino-2-methyl-5-(diphosphooxymethyl)pyrimidine binding. Residues glycine 162 and 182 to 183 contribute to the 2-[(2R,5Z)-2-carboxy-4-methylthiazol-5(2H)-ylidene]ethyl phosphate site; that span reads VS.

Belongs to the thiamine-phosphate synthase family. It depends on Mg(2+) as a cofactor.

It catalyses the reaction 2-[(2R,5Z)-2-carboxy-4-methylthiazol-5(2H)-ylidene]ethyl phosphate + 4-amino-2-methyl-5-(diphosphooxymethyl)pyrimidine + 2 H(+) = thiamine phosphate + CO2 + diphosphate. The enzyme catalyses 2-(2-carboxy-4-methylthiazol-5-yl)ethyl phosphate + 4-amino-2-methyl-5-(diphosphooxymethyl)pyrimidine + 2 H(+) = thiamine phosphate + CO2 + diphosphate. The catalysed reaction is 4-methyl-5-(2-phosphooxyethyl)-thiazole + 4-amino-2-methyl-5-(diphosphooxymethyl)pyrimidine + H(+) = thiamine phosphate + diphosphate. Its pathway is cofactor biosynthesis; thiamine diphosphate biosynthesis; thiamine phosphate from 4-amino-2-methyl-5-diphosphomethylpyrimidine and 4-methyl-5-(2-phosphoethyl)-thiazole: step 1/1. Functionally, condenses 4-methyl-5-(beta-hydroxyethyl)thiazole monophosphate (THZ-P) and 2-methyl-4-amino-5-hydroxymethyl pyrimidine pyrophosphate (HMP-PP) to form thiamine monophosphate (TMP). The polypeptide is Thiamine-phosphate synthase (Pyrococcus horikoshii (strain ATCC 700860 / DSM 12428 / JCM 9974 / NBRC 100139 / OT-3)).